The following is a 370-amino-acid chain: Chaperone protein DnaJ (370 aa).

The J domain maps to 6 to 70; the sequence is DYYEVLGVQR…EKRSMYDRFG (65 aa). The CR-type zinc finger occupies 128–208; that stretch reads GVEKTIEYRR…CRGEGRIRQT (81 aa). Residues Cys141, Cys144, Cys158, Cys161, Cys182, Cys185, Cys196, and Cys199 each contribute to the Zn(2+) site. CXXCXGXG motif repeat units follow at residues 141–148, 158–165, 182–189, and 196–203; these read CPACRGSG, CPKCGGLG, CDMCRGEG, and CRECRGEG.

Belongs to the DnaJ family. Homodimer. Requires Zn(2+) as cofactor.

The protein localises to the cytoplasm. Its function is as follows. Participates actively in the response to hyperosmotic and heat shock by preventing the aggregation of stress-denatured proteins and by disaggregating proteins, also in an autonomous, DnaK-independent fashion. Unfolded proteins bind initially to DnaJ; upon interaction with the DnaJ-bound protein, DnaK hydrolyzes its bound ATP, resulting in the formation of a stable complex. GrpE releases ADP from DnaK; ATP binding to DnaK triggers the release of the substrate protein, thus completing the reaction cycle. Several rounds of ATP-dependent interactions between DnaJ, DnaK and GrpE are required for fully efficient folding. Also involved, together with DnaK and GrpE, in the DNA replication of plasmids through activation of initiation proteins. This Roseiflexus castenholzii (strain DSM 13941 / HLO8) protein is Chaperone protein DnaJ.